Consider the following 138-residue polypeptide: Secreted RxLR effector protein 51 (138 aa).

Residues 1 to 19 (MRSSTILFVLGVAMVAVNG) form the signal peptide. The RxLR-dEER motif lies at 38–53 (RLLRSNSGKHKTDEER). N-linked (GlcNAc...) asparagine glycosylation is present at Asn-101.

This sequence belongs to the RxLR effector family.

Its subcellular location is the secreted. It localises to the host nucleus. Its function is as follows. Secreted effector that completely suppresses the host cell death induced by cell death-inducing proteins. The polypeptide is Secreted RxLR effector protein 51 (Plasmopara viticola (Downy mildew of grapevine)).